We begin with the raw amino-acid sequence, 286 residues long: Glycine--tRNA ligase alpha subunit (286 aa).

Belongs to the class-II aminoacyl-tRNA synthetase family. Tetramer of two alpha and two beta subunits.

The protein localises to the cytoplasm. The catalysed reaction is tRNA(Gly) + glycine + ATP = glycyl-tRNA(Gly) + AMP + diphosphate. The chain is Glycine--tRNA ligase alpha subunit from Thermotoga neapolitana (strain ATCC 49049 / DSM 4359 / NBRC 107923 / NS-E).